Consider the following 400-residue polypeptide: Putative cytochrome P450 133B2 (400 aa).

Cys-348 contributes to the heme binding site.

The protein belongs to the cytochrome P450 family. It depends on heme as a cofactor.

The chain is Putative cytochrome P450 133B2 (cyp133B2) from Xylella fastidiosa (strain 9a5c).